Reading from the N-terminus, the 185-residue chain is Elongation factor P (185 aa).

This sequence belongs to the elongation factor P family.

It localises to the cytoplasm. It participates in protein biosynthesis; polypeptide chain elongation. In terms of biological role, involved in peptide bond synthesis. Stimulates efficient translation and peptide-bond synthesis on native or reconstituted 70S ribosomes in vitro. Probably functions indirectly by altering the affinity of the ribosome for aminoacyl-tRNA, thus increasing their reactivity as acceptors for peptidyl transferase. In Mesomycoplasma hyopneumoniae (strain J / ATCC 25934 / NCTC 10110) (Mycoplasma hyopneumoniae), this protein is Elongation factor P.